The sequence spans 685 residues: Polyphosphate kinase (685 aa).

Asn45 serves as a coordination point for ATP. Residues Arg375 and Arg405 each coordinate Mg(2+). Residue His435 is the Phosphohistidine intermediate of the active site. Residues Tyr468, Arg564, and His592 each coordinate ATP.

The protein belongs to the polyphosphate kinase 1 (PPK1) family. Mg(2+) serves as cofactor. Post-translationally, an intermediate of this reaction is the autophosphorylated ppk in which a phosphate is covalently linked to a histidine residue through a N-P bond.

The enzyme catalyses [phosphate](n) + ATP = [phosphate](n+1) + ADP. Catalyzes the reversible transfer of the terminal phosphate of ATP to form a long-chain polyphosphate (polyP). This chain is Polyphosphate kinase, found in Neisseria meningitidis serogroup A / serotype 4A (strain DSM 15465 / Z2491).